The sequence spans 274 residues: MTVRKNQATLTADEKRRFVAAVLELKRSGRYDEFVTTHNAFIIGDTDAGERTGHRSPSFLPWHRRYLLEFERALQSVDASVALPYWDWSADRTARASLWAPDFLGGTGRSLDGRVMDGPFAASAGNWPINVRVDGRAYLRRSLGTAVRELPTRAEVESVLGMATYDTAPWNSASDGFRNHLEGWRGVNLHNRVHVWVGGQMATGMSPNDPVFWLHHAYVDKLWAEWQRRHPGSGYLPAAGTPDVVDLNDRMKPWNDTSPADLLDHTAHYTFDTD.

The Cu cation site is built by His-38, His-54, His-63, His-190, His-194, and His-216.

This sequence belongs to the tyrosinase family. It depends on Cu(2+) as a cofactor.

It carries out the reaction 2 L-dopa + O2 = 2 L-dopaquinone + 2 H2O. The enzyme catalyses L-tyrosine + O2 = L-dopaquinone + H2O. In terms of biological role, this is a copper-containing oxidase that functions in the formation of pigments such as melanins and other polyphenolic compounds. The polypeptide is Tyrosinase (melC2) (Streptomyces glaucescens).